Reading from the N-terminus, the 555-residue chain is Transmembrane protein 87A (555 aa).

Residues 1 to 21 form the signal peptide; sequence MAAAAWLQVLPVILLLLGAHP. Topologically, residues 22-225 are lumenal; that stretch reads SPLSFFSAGP…YEYLTLEDYP (204 aa). 2 cysteine pairs are disulfide-bonded: Cys-74-Cys-128 and Cys-89-Cys-431. Asn-79, Asn-127, Asn-157, and Asn-160 each carry an N-linked (GlcNAc...) asparagine glycan. The chain crosses the membrane as a helical span at residues 226–246; that stretch reads LMIFFMVMCIVYVLFGVLWLA. The Cytoplasmic segment spans residues 247–257; that stretch reads WSACYWRDLLR. The helical transmembrane segment at 258–278 threads the bilayer; sequence IQFWIGAVIFLGMLEKAVFYA. The Lumenal portion of the chain corresponds to 279-305; that stretch reads EFQNIRYKGESVQGALILAELLSAVKR. The helical transmembrane segment at 306–322 threads the bilayer; it reads SLARTLVIIVSLGYGIV. The Cytoplasmic portion of the chain corresponds to 323–325; the sequence is KPR. Residues 326-346 traverse the membrane as a helical segment; sequence LGVTLHKVVVAGALYLLFSGM. At 347–361 the chain is on the lumenal side; it reads EGVLRVTGAQTDLAS. A helical membrane pass occupies residues 362-382; the sequence is LAFIPLAFLDTALCWWIFISL. The Cytoplasmic portion of the chain corresponds to 383-403; that stretch reads TQTMKLLKLRRNIVKLSLYRH. A helical membrane pass occupies residues 404-424; the sequence is FTNTLILAVAASIVFIIWTTM. Topologically, residues 425 to 437 are lumenal; sequence KFRIVTCQSDWRE. The chain crosses the membrane as a helical span at residues 438 to 458; the sequence is LWVDDAIWRLLFSMILFVIMV. Topologically, residues 459 to 555 are cytoplasmic; that stretch reads LWRPSANNQR…ITHFERSKME (97 aa). The disordered stretch occupies residues 473-516; sequence PLSEEEEEDEQKEPMLKESFEGMKMRSTKQEPNGNSKVNKAQED. The segment covering 484 to 496 has biased composition (basic and acidic residues); it reads KEPMLKESFEGMK. Over residues 502-511 the composition is skewed to polar residues; that stretch reads QEPNGNSKVN. The residue at position 540 (Ser-540) is a Phosphoserine.

This sequence belongs to the LU7TM family. TMEM87 subfamily. As to quaternary structure, may interact with STOML3; STOML3 potentiates the mechanosensitive ion channel activity associated with TMEM87A.

It localises to the cell membrane. The protein resides in the golgi apparatus membrane. Its subcellular location is the cell projection. It is found in the ruffle. Potential monoatomic ion channel gated by mechanical force, implicated in normal touch sensitivity through the generation of mechanically activated currents. However, a direct channel activity is debated and an alternative could be that it functions as a chaperone for an unidentified mechanosensitive ion channel. Could also be involved in cell mechanosensitivity regulating cell adhesion and migration. May also be involved in retrograde transport from endosomes to the trans-Golgi network (TGN). This is Transmembrane protein 87A from Homo sapiens (Human).